We begin with the raw amino-acid sequence, 477 residues long: Calcium/calmodulin-dependent protein kinase type 1G (477 aa).

The 255-residue stretch at 23–277 folds into the Protein kinase domain; sequence FIFMEVLGSG…CEKALRHPWI (255 aa). Residues 29–37 and Lys-52 contribute to the ATP site; that span reads LGSGAFSEV. Asp-143 (proton acceptor) is an active-site residue. The interval 277-317 is autoinhibitory domain; that stretch reads IDGNTALHRDIYPSVSLQIQKNFAKSKWRQAFNAAAVVHHM. Residues 297–318 form a calmodulin-binding region; sequence KNFAKSKWRQAFNAAAVVHHMR. Residues 326-388 form a disordered region; sequence SPSVRQEVEN…SRPSAPSGGR (63 aa). Over residues 376–388 the composition is skewed to low complexity; that stretch reads SHSSRPSAPSGGR.

It belongs to the protein kinase superfamily. CAMK Ser/Thr protein kinase family. CaMK subfamily. May be prenylated on Cys-474. Highly expressed in brain, in neuronal cell bodies of the central nucleus of amygdala and ventromedial hypothalamic nucleus. Also detected in heart, testis, and kidney.

It localises to the cytoplasm. It is found in the golgi apparatus membrane. The protein resides in the cell membrane. The enzyme catalyses L-seryl-[protein] + ATP = O-phospho-L-seryl-[protein] + ADP + H(+). It carries out the reaction L-threonyl-[protein] + ATP = O-phospho-L-threonyl-[protein] + ADP + H(+). Activated by Ca(2+)/calmodulin. Binding of calmodulin is thought to result in a conformational change and leads to activation through phosphorylation by CAMKK1. Functionally, calcium/calmodulin-dependent protein kinase belonging to a proposed calcium-triggered signaling cascade. In vitro phosphorylates transcription factor CREB1. The sequence is that of Calcium/calmodulin-dependent protein kinase type 1G (Camk1g) from Mus musculus (Mouse).